The chain runs to 132 residues: Bleomycin resistance protein (132 aa).

The VOC domain occupies Met1–Gln129.

This sequence belongs to the bleomycin resistance protein family.

Its function is as follows. Binding protein with a strong affinity to the bleomycin family of antibiotics. The protein is Bleomycin resistance protein (bleO) of Geobacillus stearothermophilus (Bacillus stearothermophilus).